The sequence spans 560 residues: Mitochondria-eating protein (560 aa).

The interval 1-294 (MADNLRKLVS…SHSRNHSRSR (294 aa)) is interaction with YWHAG/14-3-3 protein gamma. Phosphoserine is present on residues Ser13, Ser85, Ser156, and Ser159. Coiled-coil stretches lie at residues 118 to 186 (DRNI…SRHR) and 223 to 248 (DYEK…LQGR). 2 disordered regions span residues 178 to 217 (QAQE…AQRK) and 243 to 316 (SVLQ…AKLS). Over residues 181–209 (EESRHRPPEHRSSEKRGSERRRVEPRGAD) the composition is skewed to basic and acidic residues. The segment covering 248–262 (RSTRSRSPSPASCSR) has biased composition (low complexity). A compositionally biased stretch (basic residues) spans 263–293 (SRSHSHSRSRSHSHSRSGSHSRSHSRNHSRS). Polar residues predominate over residues 300–310 (TAVSGVRSPSP). Phosphoserine is present on residues Ser307, Ser309, and Ser531.

The protein belongs to the MIEAP family. As to quaternary structure, interacts (via coiled-coil domains) with BNIP3L (via BH3 domain). Interacts (via coiled-coil domains) with BNIP3 (via BH3 domain). Interacts with YWHAG/14-3-3 protein gamma; a protein that also plays a role in MALM.

The protein resides in the cytoplasm. It is found in the cytosol. Its subcellular location is the mitochondrion outer membrane. The protein localises to the mitochondrion matrix. Key regulator of mitochondrial quality that mediates the repairing or degradation of unhealthy mitochondria in response to mitochondrial damage. Mediator of mitochondrial protein catabolic process (also named MALM) by mediating the degradation of damaged proteins inside mitochondria by promoting the accumulation in the mitochondrial matrix of hydrolases that are characteristic of the lysosomal lumen. Also involved in mitochondrion degradation of damaged mitochondria by promoting the formation of vacuole-like structures (named MIV), which engulf and degrade unhealthy mitochondria by accumulating lysosomes. The physical interaction of SPATA18/MIEAP, BNIP3 and BNIP3L/NIX at the mitochondrial outer membrane regulates the opening of a pore in the mitochondrial double membrane in order to mediate the translocation of lysosomal proteins from the cytoplasm to the mitochondrial matrix. Binds cardiolipin. May form molecular condensates (non-membrane-bounded organelles) within mitochondria that compartmentalize and promote cardiolipin metabolism. The chain is Mitochondria-eating protein (SPATA18) from Sus scrofa (Pig).